The primary structure comprises 513 residues: Histone acetyltransferase KAT5 (513 aa).

The 58-residue stretch at 8 to 65 (IEGCRLPVLRRNQDNEDEWPLAEILSVKDISGRKLFYVHYIDFNKRLDEWVTHERLDL) folds into the Tudor-knot domain. N6-acetyllysine is present on lysine 52. A disordered region spans residues 69 to 106 (QFPKKEAKTPTKNGLPGSRPGSPEREVPASAQASGKTL). At serine 86 the chain carries Phosphoserine. Serine 90 is modified (phosphoserine; by CDK1 and CDK9). N6-acetyllysine; by autocatalysis occurs at positions 104 and 120. A disordered region spans residues 122-217 (REAIPGGEPD…SAPRMTGSLV (96 aa)). Positions 133–144 (PLSSSSCLQPNH) are enriched in polar residues. N6-acetyllysine; by autocatalysis occurs at positions 148, 150, 187, and 189. Serine 199 bears the Phosphoserine mark. Positions 227 to 504 (TRMKNIECIE…IDSKCLHFTP (278 aa)) constitute an MYST-type HAT domain. A C2HC MYST-type zinc finger spans residues 260 to 285 (LYLCEFCLKYGRSLKCLQRHLTKCDL). Lysine 327 is modified (N6-acetyllysine; by autocatalysis). Residues 368-513 (ACILTLPPYQ…PKDWSKRGKW (146 aa)) form an interaction with ATF2 region. Acetyl-CoA contacts are provided by residues 370–372 (ILT) and 377–383 (QRRGYGK). Residue glutamate 403 is the Proton donor/acceptor of the active site. Acetyl-CoA-binding residues include serine 407 and serine 416. Lysine 430 participates in a covalent cross-link: Glycyl lysine isopeptide (Lys-Gly) (interchain with G-Cter in SUMO1); alternate. Residue lysine 430 forms a Glycyl lysine isopeptide (Lys-Gly) (interchain with G-Cter in SUMO2); alternate linkage. Lysine 451 is covalently cross-linked (Glycyl lysine isopeptide (Lys-Gly) (interchain with G-Cter in SUMO1)).

Belongs to the MYST (SAS/MOZ) family. Component of the NuA4 histone acetyltransferase complex which contains the catalytic subunit KAT5/TIP60 and the subunits EP400, TRRAP/PAF400, BRD8/SMAP, EPC1, DMAP1/DNMAP1, RUVBL1/TIP49, RUVBL2, ING3, actin, ACTL6A/BAF53A, MORF4L1/MRG15, MORF4L2/MRGX, MRGBP, YEATS4/GAS41, VPS72/YL1 and MEAF6. KAT5/TIP60, EPC1, and ING3 together constitute a minimal HAT complex termed Piccolo NuA4. The NuA4 complex interacts with MYC. Interacts with ATM. Interacts with JADE1. Interacts with PLA2G4A/CPLA2, EDNRA and HDAC7. Interacts with the cytoplasmic tail of APP and APBB1/FE65. Interacts with TRIM24 and TRIM68. Forms a complex with SENP6 and UBE2I in response to UV irradiation. Identified in a complex with HINT1. Interacts with ATF2 and CUL3. Interacts with NR1D2 (via N-terminus). Component of a SWR1-like complex. Interacts with FOXP3. Interacts with ZBTB49. Interacts with SRF. Interacts with ATF3; promoting autoacetylation and deubiquitination by USP7. Interacts with EP300/p300; interaction promotes KAT5 autoacetylation. Interacts with PRKDC; interaction is impaired following KAT5 sumoylation. Interacts with GPR50. Interacts with NME3; this interaction enables recruitment of NME3 at DNA damage sites where it plays a role in the repair of DNA. Post-translationally, phosphorylated on Ser-86 and Ser-90; enhanced during G2/M phase. The phosphorylated form has a higher activity. Phosphorylation at Ser-90 by CDK1 or CDK9 is a prerequisite for phosphorylation at Ser-86 by GSK3. Phosphorylation at Ser-86 by GSK3 (GSK3A or GSK3B) activates acetyltransferase and acyltransferase activity. Phosphorylation at Ser-90 by CDK9 promotes KAT5 recruitment to chromatin. Phosphorylation by VRK1 following DNA damage promotes KAT5 association with chromatin and histone acetyltransferase activity. In terms of processing, autoacetylated. Autoacetylation is required for histone acetyltransferase activity. Autoacetylation at Lys-327 is facilitated by interaction with EP300/p300: it prevents ubiquitination and subsequent degradation by the proteasome and promotes acetylation of target proteins. Deacetylated by HDAC3 and SIRT1. Deacetylation by HDAC3 promotes its ubiquitination and cytoplasmic localization. Sumoylated by UBE2I at Lys-430 and Lys-451, leading to increase of its histone acetyltransferase activity in UV-induced DNA damage response, as well as its translocation to nuclear bodies. Sumoylation with SUMO2 by PIAS4 at Lys-430 promotes repair of DNA double-strand breaks (DSBs) via homologous recombination (HR). Sumoylation by PIAS4 impairs interaction with PRKDC, inhibiting non-homologous end joining (NHEJ)-mediated repair of DSBs, thereby facilitating HR. Desumoylated by SENP3. Post-translationally, ubiquitinated by MDM2, leading to its proteasome-dependent degradation. Ubiquitination is prevented by autoacetylation at Lys-327. Ubiquitinated following deacetylation by HDAC3, leading to cytoplasmic localization. Deubiquitinated by USP7 following interaction with ATF3, promoting its stabilization. In terms of tissue distribution, expressed in testis, heart, brain, kidney and liver. Weakly expressed in lung.

The protein resides in the nucleus. Its subcellular location is the chromosome. The protein localises to the cytoplasm. It is found in the centromere. It localises to the kinetochore. The protein resides in the cytoskeleton. Its subcellular location is the spindle pole. The protein localises to the nucleolus. It is found in the perinuclear region. It catalyses the reaction L-lysyl-[histone] + acetyl-CoA = N(6)-acetyl-L-lysyl-[histone] + CoA + H(+). It carries out the reaction L-lysyl-[protein] + acetyl-CoA = N(6)-acetyl-L-lysyl-[protein] + CoA + H(+). The catalysed reaction is (2E)-butenoyl-CoA + L-lysyl-[protein] = N(6)-(2E)-butenoyl-L-lysyl-[protein] + CoA + H(+). The enzyme catalyses 2-hydroxyisobutanoyl-CoA + L-lysyl-[protein] = N(6)-(2-hydroxyisobutanoyl)-L-lysyl-[protein] + CoA + H(+). It catalyses the reaction (S)-lactoyl-CoA + L-lysyl-[protein] = N(6)-[(S)-lactoyl]-L-lysyl-[protein] + CoA + H(+). Its activity is regulated as follows. Acyltransferase and acetyltransferase activities are activated by phosphorylation and autoacetylation. Autoacetylation activates the histone acetyltransferase activity. Its function is as follows. Catalytic subunit of the NuA4 histone acetyltransferase complex, a multiprotein complex involved in transcriptional activation of select genes principally by acetylation of nucleosomal histones H2A and H4. Histone acetylation alters nucleosome-DNA interactions and promotes interaction of the modified histones with other proteins which positively regulate transcription. The NuA4 histone acetyltransferase complex is required for the activation of transcriptional programs associated with proto-oncogene mediated growth induction, tumor suppressor mediated growth arrest and replicative senescence, apoptosis, and DNA repair. The NuA4 complex plays a direct role in repair of DNA double-strand breaks (DSBs) by promoting homologous recombination (HR): the complex inhibits TP53BP1 binding to chromatin via MBTD1, which recognizes and binds histone H4 trimethylated at 'Lys-20' (H4K20me), and KAT5 that catalyzes acetylation of 'Lys-15' of histone H2A (H2AK15ac), thereby blocking the ubiquitination mark required for TP53BP1 localization at DNA breaks. Also involved in DSB repair by mediating acetylation of 'Lys-5' of histone H2AX (H2AXK5ac), promoting NBN/NBS1 assembly at the sites of DNA damage. The NuA4 complex plays a key role in hematopoietic stem cell maintenance and is required to maintain acetylated H2A.Z/H2AZ1 at MYC target genes. The NuA4 complex is also required for spermatid development by promoting acetylation of histones: histone hyperacetylation is required for histone replacement during the transition from round to elongating spermatids. Component of a SWR1-like complex that specifically mediates the removal of histone H2A.Z/H2AZ1 from the nucleosome. Also acetylates non-histone proteins, such as BMAL1, ATM, AURKB, CHKA, CGAS, ERCC4/XPF, LPIN1, TP53/p53, NDC80/HEC1, NR1D2, RAN, SOX4, FOXP3, SQSTM1, ULK1 and RUBCNL/Pacer. Directly acetylates and activates ATM. Promotes nucleotide excision repair (NER) by mediating acetylation of ERCC4/XPF, thereby promoting formation of the ERCC4-ERCC1 complex. Relieves NR1D2-mediated inhibition of APOC3 expression by acetylating NR1D2. Acts as a regulator of regulatory T-cells (Treg) by catalyzing FOXP3 acetylation, thereby promoting FOXP3 transcriptional repressor activity. Involved in skeletal myoblast differentiation by mediating acetylation of SOX4. Catalyzes acetylation of APBB1/FE65, increasing its transcription activator activity. Promotes transcription elongation during the activation phase of the circadian cycle by catalyzing acetylation of BMAL1, promoting elongation of circadian transcripts. Together with GSK3 (GSK3A or GSK3B), acts as a regulator of autophagy: phosphorylated at Ser-86 by GSK3 under starvation conditions, leading to activate acetyltransferase activity and promote acetylation of key autophagy regulators, such as ULK1 and RUBCNL/Pacer. Acts as a regulator of the cGAS-STING innate antiviral response by catalyzing acetylation the N-terminus of CGAS, thereby promoting CGAS DNA-binding and activation. Also regulates lipid metabolism by mediating acetylation of CHKA or LPIN1. Promotes lipolysis of lipid droplets following glucose deprivation by mediating acetylation of isoform 1 of CHKA, thereby promoting monomerization of CHKA and its conversion into a tyrosine-protein kinase. Acts as a regulator of fatty-acid-induced triacylglycerol synthesis by catalyzing acetylation of LPIN1, thereby promoting the synthesis of diacylglycerol. In addition to protein acetyltransferase, can use different acyl-CoA substrates, such as (2E)-butenoyl-CoA (crotonyl-CoA), S-lactoyl-CoA (lactyl-CoA) and 2-hydroxyisobutanoyl-CoA (2-hydroxyisobutyryl-CoA), and is able to mediate protein crotonylation, lactylation and 2-hydroxyisobutyrylation, respectively. Acts as a key regulator of chromosome segregation and kinetochore-microtubule attachment during mitosis by mediating acetylation or crotonylation of target proteins. Catalyzes acetylation of AURKB at kinetochores, increasing AURKB activity and promoting accurate chromosome segregation in mitosis. Acetylates RAN during mitosis, promoting microtubule assembly at mitotic chromosomes. Acetylates NDC80/HEC1 during mitosis, promoting robust kinetochore-microtubule attachment. Catalyzes crotonylation of MAPRE1/EB1, thereby ensuring accurate spindle positioning in mitosis. Catalyzes lactylation of NBN/NBS1 in response to DNA damage, thereby promoting DNA double-strand breaks (DSBs) via homologous recombination (HR). This chain is Histone acetyltransferase KAT5, found in Mus musculus (Mouse).